Consider the following 321-residue polypeptide: Glutaminase (321 aa).

S69, N120, E165, N172, Y196, Y248, and V266 together coordinate substrate.

Belongs to the glutaminase family. Homotetramer.

It catalyses the reaction L-glutamine + H2O = L-glutamate + NH4(+). In Bacteroides fragilis (strain YCH46), this protein is Glutaminase.